A 188-amino-acid chain; its full sequence is Large ribosomal subunit protein bL35m (188 aa).

It belongs to the bacterial ribosomal protein bL35 family. As to quaternary structure, component of the mitochondrial large ribosomal subunit (mt-LSU). Mature mammalian 55S mitochondrial ribosomes consist of a small (28S) and a large (39S) subunit. The 28S small subunit contains a 12S ribosomal RNA (12S mt-rRNA) and 30 different proteins. The 39S large subunit contains a 16S rRNA (16S mt-rRNA), a copy of mitochondrial valine transfer RNA (mt-tRNA(Val)), which plays an integral structural role, and 52 different proteins.

Its subcellular location is the mitochondrion. This is Large ribosomal subunit protein bL35m (MRPL35) from Homo sapiens (Human).